Consider the following 354-residue polypeptide: DNA integrity scanning protein DisA (354 aa).

The region spanning 6-144 is the DAC domain; it reads DDELKKILKI…GDIKYVLRDS (139 aa). ATP-binding positions include G73, L91, and 104–108; that span reads TRHRT.

It belongs to the DisA family. Homooctamer. Requires Mg(2+) as cofactor.

The catalysed reaction is 2 ATP = 3',3'-c-di-AMP + 2 diphosphate. In terms of biological role, participates in a DNA-damage check-point that is active prior to asymmetric division when DNA is damaged. DisA forms globular foci that rapidly scan along the chromosomes during sporulation, searching for lesions. When a lesion is present, DisA pauses at the lesion site. This triggers a cellular response that culminates in a temporary block in sporulation initiation. Functionally, also has diadenylate cyclase activity, catalyzing the condensation of 2 ATP molecules into cyclic di-AMP (c-di-AMP). c-di-AMP acts as a signaling molecule that couples DNA integrity with progression of sporulation. The rise in c-di-AMP level generated by DisA while scanning the chromosome, operates as a positive signal that advances sporulation; upon encountering a lesion, the DisA focus arrests at the damaged site and halts c-di-AMP synthesis. In Clostridium perfringens (strain 13 / Type A), this protein is DNA integrity scanning protein DisA.